The sequence spans 168 residues: Photosystem I assembly protein Ycf3 (168 aa).

TPR repeat units follow at residues 35–68 (AFTY…EIDP), 72–105 (SYIL…NPFL), and 120–153 (GEQA…TPGN).

It belongs to the Ycf3 family.

The protein resides in the plastid. Its subcellular location is the chloroplast thylakoid membrane. Its function is as follows. Essential for the assembly of the photosystem I (PSI) complex. May act as a chaperone-like factor to guide the assembly of the PSI subunits. In Ranunculus macranthus (Large buttercup), this protein is Photosystem I assembly protein Ycf3.